We begin with the raw amino-acid sequence, 405 residues long: Arginine biosynthesis bifunctional protein ArgJ (405 aa).

Residues threonine 152, lysine 178, threonine 189, glutamate 276, asparagine 400, and serine 405 each coordinate substrate. Catalysis depends on threonine 189, which acts as the Nucleophile.

The protein belongs to the ArgJ family. Heterotetramer of two alpha and two beta chains.

It is found in the cytoplasm. It catalyses the reaction N(2)-acetyl-L-ornithine + L-glutamate = N-acetyl-L-glutamate + L-ornithine. It carries out the reaction L-glutamate + acetyl-CoA = N-acetyl-L-glutamate + CoA + H(+). It participates in amino-acid biosynthesis; L-arginine biosynthesis; L-ornithine and N-acetyl-L-glutamate from L-glutamate and N(2)-acetyl-L-ornithine (cyclic): step 1/1. It functions in the pathway amino-acid biosynthesis; L-arginine biosynthesis; N(2)-acetyl-L-ornithine from L-glutamate: step 1/4. Its function is as follows. Catalyzes two activities which are involved in the cyclic version of arginine biosynthesis: the synthesis of N-acetylglutamate from glutamate and acetyl-CoA as the acetyl donor, and of ornithine by transacetylation between N(2)-acetylornithine and glutamate. This is Arginine biosynthesis bifunctional protein ArgJ from Chromobacterium violaceum (strain ATCC 12472 / DSM 30191 / JCM 1249 / CCUG 213 / NBRC 12614 / NCIMB 9131 / NCTC 9757 / MK).